A 320-amino-acid chain; its full sequence is Uroplakin-3b (320 aa).

The signal sequence occupies residues methionine 1–glycine 29. Residues glutamate 30–proline 240 are Lumenal-facing. N-linked (GlcNAc...) asparagine glycosylation is present at asparagine 133. The chain crosses the membrane as a helical span at residues threonine 241 to alanine 266. Residues aspartate 267 to glutamate 320 lie on the Cytoplasmic side of the membrane. The tract at residues glutamine 273 to glutamine 303 is disordered.

The protein belongs to the uroplakin-3 family. Heterodimer with uroplakin-1B (UPK1B).

It localises to the cell membrane. Functionally, component of the asymmetric unit membrane (AUM); a highly specialized biomembrane elaborated by terminally differentiated urothelial cells. May play an important role in AUM-cytoskeleton interaction in terminally differentiated urothelial cells. It also contributes to the formation of urothelial glycocalyx which may play an important role in preventing bacterial adherence. The protein is Uroplakin-3b (UPK3B) of Homo sapiens (Human).